Consider the following 213-residue polypeptide: Thiamine-phosphate synthase (213 aa).

Residues 40-44 and Asn-75 contribute to the 4-amino-2-methyl-5-(diphosphooxymethyl)pyrimidine site; that span reads QFREK. Positions 76 and 95 each coordinate Mg(2+). Ser-113 contributes to the 4-amino-2-methyl-5-(diphosphooxymethyl)pyrimidine binding site. 139-141 provides a ligand contact to 2-[(2R,5Z)-2-carboxy-4-methylthiazol-5(2H)-ylidene]ethyl phosphate; that stretch reads TPS. Residue Lys-142 coordinates 4-amino-2-methyl-5-(diphosphooxymethyl)pyrimidine. 2-[(2R,5Z)-2-carboxy-4-methylthiazol-5(2H)-ylidene]ethyl phosphate is bound by residues Gly-171 and 191–192; that span reads IS.

It belongs to the thiamine-phosphate synthase family. Mg(2+) serves as cofactor.

The enzyme catalyses 2-[(2R,5Z)-2-carboxy-4-methylthiazol-5(2H)-ylidene]ethyl phosphate + 4-amino-2-methyl-5-(diphosphooxymethyl)pyrimidine + 2 H(+) = thiamine phosphate + CO2 + diphosphate. It carries out the reaction 2-(2-carboxy-4-methylthiazol-5-yl)ethyl phosphate + 4-amino-2-methyl-5-(diphosphooxymethyl)pyrimidine + 2 H(+) = thiamine phosphate + CO2 + diphosphate. The catalysed reaction is 4-methyl-5-(2-phosphooxyethyl)-thiazole + 4-amino-2-methyl-5-(diphosphooxymethyl)pyrimidine + H(+) = thiamine phosphate + diphosphate. It participates in cofactor biosynthesis; thiamine diphosphate biosynthesis; thiamine phosphate from 4-amino-2-methyl-5-diphosphomethylpyrimidine and 4-methyl-5-(2-phosphoethyl)-thiazole: step 1/1. In terms of biological role, condenses 4-methyl-5-(beta-hydroxyethyl)thiazole monophosphate (THZ-P) and 2-methyl-4-amino-5-hydroxymethyl pyrimidine pyrophosphate (HMP-PP) to form thiamine monophosphate (TMP). The chain is Thiamine-phosphate synthase from Staphylococcus aureus (strain bovine RF122 / ET3-1).